The primary structure comprises 464 residues: tRNA modification GTPase MnmE (464 aa).

Positions 27, 90, and 129 each coordinate (6S)-5-formyl-5,6,7,8-tetrahydrofolate. The region spanning G222–S384 is the TrmE-type G domain. GTP is bound by residues N232–S237, S251–T257, and D276–G279. Mg(2+) contacts are provided by S236 and T257. K464 provides a ligand contact to (6S)-5-formyl-5,6,7,8-tetrahydrofolate.

The protein belongs to the TRAFAC class TrmE-Era-EngA-EngB-Septin-like GTPase superfamily. TrmE GTPase family. In terms of assembly, homodimer. Heterotetramer of two MnmE and two MnmG subunits. K(+) serves as cofactor.

The protein localises to the cytoplasm. Functionally, exhibits a very high intrinsic GTPase hydrolysis rate. Involved in the addition of a carboxymethylaminomethyl (cmnm) group at the wobble position (U34) of certain tRNAs, forming tRNA-cmnm(5)s(2)U34. The polypeptide is tRNA modification GTPase MnmE (Borrelia garinii subsp. bavariensis (strain ATCC BAA-2496 / DSM 23469 / PBi) (Borreliella bavariensis)).